A 645-amino-acid polypeptide reads, in one-letter code: Sister chromatid cohesion protein 1 (645 aa).

3 disordered regions span residues 292–311 (FEPE…FALE), 495–527 (QSGF…GQLE), and 619–645 (CPLS…MRPV).

This sequence belongs to the rad21 family. In terms of assembly, component of the cohesin complex, composed of the smc-1 and smc-3 heterodimer attached via their hinge domain, scc-1 which links them, and scc-3. Interacts with smc-1, smc-3, scc-3 and tim-1.

The protein resides in the nucleus. It is found in the chromosome. It localises to the cytoplasm. Its function is as follows. Cleavable component of the cohesin complex involved in chromosome cohesion during cell cycle. The cohesin complex is required for the cohesion of sister chromatids after DNA replication. The cohesin complex apparently forms a large proteinaceous ring within which sister chromatids can be trapped. At metaphase-anaphase transition, this protein is cleaved and dissociates from chromatin, allowing sister chromatids to segregate. The sequence is that of Sister chromatid cohesion protein 1 from Caenorhabditis elegans.